Here is a 364-residue protein sequence, read N- to C-terminus: UDP-N-acetylglucosamine--N-acetylmuramyl-(pentapeptide) pyrophosphoryl-undecaprenol N-acetylglucosamine transferase (364 aa).

UDP-N-acetyl-alpha-D-glucosamine is bound by residues 10-12 (TGG), N124, R165, S193, I248, and Q293.

It belongs to the glycosyltransferase 28 family. MurG subfamily.

The protein resides in the cell inner membrane. It carries out the reaction di-trans,octa-cis-undecaprenyl diphospho-N-acetyl-alpha-D-muramoyl-L-alanyl-D-glutamyl-meso-2,6-diaminopimeloyl-D-alanyl-D-alanine + UDP-N-acetyl-alpha-D-glucosamine = di-trans,octa-cis-undecaprenyl diphospho-[N-acetyl-alpha-D-glucosaminyl-(1-&gt;4)]-N-acetyl-alpha-D-muramoyl-L-alanyl-D-glutamyl-meso-2,6-diaminopimeloyl-D-alanyl-D-alanine + UDP + H(+). Its pathway is cell wall biogenesis; peptidoglycan biosynthesis. Its function is as follows. Cell wall formation. Catalyzes the transfer of a GlcNAc subunit on undecaprenyl-pyrophosphoryl-MurNAc-pentapeptide (lipid intermediate I) to form undecaprenyl-pyrophosphoryl-MurNAc-(pentapeptide)GlcNAc (lipid intermediate II). The protein is UDP-N-acetylglucosamine--N-acetylmuramyl-(pentapeptide) pyrophosphoryl-undecaprenol N-acetylglucosamine transferase of Geobacter sulfurreducens (strain ATCC 51573 / DSM 12127 / PCA).